The sequence spans 61 residues: Probradykinin-1 (61 aa).

An N-terminal signal peptide occupies residues 1–22 (MSFLKKSLFLVLFLGLVSFSIC). A propeptide spanning residues 23–48 (EEEKRETEEEENKDETEEQSEEKKRF) is cleaved from the precursor. Residues 24-61 (EEKRETEEEENKDETEEQSEEKKRFEPVPPGFTPFRLT) form a disordered region. Over residues 30–42 (EEEENKDETEEQS) the composition is skewed to acidic residues.

The protein belongs to the frog skin active peptide (FSAP) family. Bradykinin-related peptide subfamily. Expressed by the skin glands.

Its subcellular location is the secreted. Functionally, may produce in vitro relaxation of rat arterial smooth muscle and constriction of intestinal smooth muscle. May target bradykinin receptors (BDKRB). The chain is Probradykinin-1 from Pithecopus azureus (Orange-legged monkey tree frog).